The chain runs to 198 residues: uncharacterized protein (198 aa).

The next 4 membrane-spanning stretches (helical) occupy residues 20–40 (VIVG…GLWA), 70–90 (FFVA…TASV), 107–127 (LAIG…LLVW), and 164–184 (VAAT…VLAA).

The protein to M.tuberculosis Rv1591.

The protein resides in the cell membrane. This is an uncharacterized protein from Mycobacterium leprae (strain TN).